We begin with the raw amino-acid sequence, 79 residues long: Sec-independent protein translocase protein TatA (79 aa).

Residues 1–21 traverse the membrane as a helical segment; the sequence is MGGISIWQLLIVALIVVLLFG. The segment at 43–79 is disordered; sequence MSSEEDKKALEDTEAAKTAQTTQQATEKKPESNKEQA. Basic and acidic residues predominate over residues 46–57; it reads EEDKKALEDTEA. The segment covering 58–67 has biased composition (low complexity); the sequence is AKTAQTTQQA. Residues 68 to 79 are compositionally biased toward basic and acidic residues; it reads TEKKPESNKEQA.

It belongs to the TatA/E family. As to quaternary structure, the Tat system comprises two distinct complexes: a TatABC complex, containing multiple copies of TatA, TatB and TatC subunits, and a separate TatA complex, containing only TatA subunits. Substrates initially bind to the TatABC complex, which probably triggers association of the separate TatA complex to form the active translocon.

The protein localises to the cell inner membrane. Part of the twin-arginine translocation (Tat) system that transports large folded proteins containing a characteristic twin-arginine motif in their signal peptide across membranes. TatA could form the protein-conducting channel of the Tat system. The sequence is that of Sec-independent protein translocase protein TatA from Shewanella baltica (strain OS223).